Consider the following 337-residue polypeptide: MAAPESLRPRLCRLVRGEQGYGFHLHGEKGRRGQFIRRVEPGSPAEAAALRAGDRLVEVNGVNVEGETHHQVVQRIKAVEGQTQLLVVDKETDEELCRRQLTCTEEMAHRGLPPAHNPWEPKPDWACSGSLGSDTGQKDVNGPPRELRPRLCHLRRGPQGYGFNLHSDKSRPGQYIRSVDPGSPASHSGLRAQDRLIEVNGQNVEGLRHAEVVARIKAQEDEARLLVVDPETDEHFKRLRVVPTEEHVEGPLPSPVTNGTSPAQLNGGSVCSSRSDLPGSEKDNEDGSTWKRDPFQESGLHLSPTAAEAKEKARATRVNKRAPQMDWNRKREIFSNF.

In terms of domain architecture, PDZ 1 spans Leu11–Glu91. The interval Leu112 to Arg145 is disordered. Phosphoserine is present on residues Ser130, Ser183, Ser186, Ser254, Ser269, Ser280, and Ser303. One can recognise a PDZ 2 domain in the interval Leu151 to Glu231. Positions Val242–Phe337 are disordered. The span at Pro255–Ser275 shows a compositional bias: polar residues. Residues Trp327–Phe337 show a composition bias toward basic and acidic residues.

Homodimer, and heterodimer with NHERF1. Binds PDZK1. Interacts with SRY. Binds ADRB2, SLC9A3, P2RY1, P2YR2, RDX and LPAR2. Interacts with MCC. Found in a complex with EZR, PODXL and NHERF2. Interacts (via the PDZ domains) with PODXL (via the C-terminal PDZ-binding motif DTHL); interaction is detected in glomerular epithelium cells. Interacts with SGK1 and KCNJ1/ROMK1. Interacts (via the PDZ domains) with SLC26A6.

Its subcellular location is the endomembrane system. It localises to the nucleus. The protein localises to the apical cell membrane. Scaffold protein that connects plasma membrane proteins with members of the ezrin/moesin/radixin family and thereby helps to link them to the actin cytoskeleton and to regulate their surface expression. Necessary for cAMP-mediated phosphorylation and inhibition of SLC9A3. May also act as scaffold protein in the nucleus. In Mus musculus (Mouse), this protein is Na(+)/H(+) exchange regulatory cofactor NHE-RF2 (Nherf2).